A 468-amino-acid chain; its full sequence is Microtubule-associated tyrosine carboxypeptidase 1 (468 aa).

The span at 1–10 shows a compositional bias: polar residues; sequence MVLDSGTQVY. Disordered stretches follow at residues 1–39 and 77–112; these read MVLD…PPLY and MKRS…TLRP. Position 277 (histidine 277) interacts with Zn(2+). Catalysis depends on glutamate 278, which acts as the Nucleophile. Zn(2+) is bound by residues histidine 282 and glutamate 313.

It belongs to the peptidase MATCAP family. Requires Zn(2+) as cofactor.

Its subcellular location is the cytoplasm. The protein localises to the cytoskeleton. It carries out the reaction C-terminal L-alpha-aminoacyl-L-glutamyl-L-glutamyl-L-tyrosyl-[tubulin] + H2O = C-terminal L-alpha-aminoacyl-L-glutamyl-L-glutamyl-[tubulin] + L-tyrosine. The enzyme catalyses C-terminal L-alpha-aminoacyl-L-glutamyl-L-glutamyl-L-phenylalanyl-[tubulin] + H2O = C-terminal L-alpha-aminoacyl-L-glutamyl-L-glutamyl-[tubulin] + L-phenylalanine. Tyrosine carboxypeptidase that removes the C-terminal tyrosine residue of alpha-tubulin, thereby regulating microtubule dynamics and function. Also able to remove the C-terminal phenylalanine residue of alpha-tubulin TUBA8. Recognizes adjacent tubulin dimers along the same protofilament. The polypeptide is Microtubule-associated tyrosine carboxypeptidase 1 (Rattus norvegicus (Rat)).